The sequence spans 238 residues: Small ribosomal subunit protein uS2 (238 aa).

The protein belongs to the universal ribosomal protein uS2 family.

The sequence is that of Small ribosomal subunit protein uS2 from Synechococcus sp. (strain CC9605).